The following is a 2336-amino-acid chain: Genome polyprotein (2336 aa).

The Peptidase C28 domain maps to 1–201 (MNTTDCFIAL…WKAKVQKRLK (201 aa)). Topologically, residues 1–1481 (MNTTDCFIAL…SFVKRAFKRL (1481 aa)) are cytoplasmic. Active-site for leader protease activity residues include Cys-51, His-148, and Asp-163. 2 disordered regions span residues 197–218 (QKRLKGAGQSSPATGSQNQSGN) and 238–265 (QLGDNAISGGSNEGSTDTTSTHTTNTQN). Residue Gly-202 is the site of N-myristoyl glycine; by host attachment. Polar residues-rich tracts occupy residues 204–218 (GQSSPATGSQNQSGN) and 238–251 (QLGDNAISGGSNEG). A compositionally biased stretch (low complexity) spans 252–265 (STDTTSTHTTNTQN). Residues 789–797 (ALLRAATYY) are antigenic epitope. Residues 869 to 871 (RGD) carry the Cell attachment site motif. Residues 1190-1354 (NVHIANLCKV…DGYKVNNKLD (165 aa)) enclose the SF3 helicase domain. Residue 1218–1225 (GKSGQGKS) coordinates ATP. Residues 1482-1502 (KENFEIVALCLTLLANIVIMI) lie within the membrane without spanning it. At 1503 to 2336 (RETRKRQQMV…NAVCGDAQSL (834 aa)) the chain is on the cytoplasmic side. The disordered stretch occupies residues 1556–1591 (PGHRASDDVNSEPARPVEEQPQAEGPYTGPLERQKP). O-(5'-phospho-RNA)-tyrosine is present on residues Tyr-1582, Tyr-1605, and Tyr-1629. Residues 1653 to 1849 (APPTDLQKMV…YCSCVSRSML (197 aa)) enclose the Peptidase C3 domain. His-1696 functions as the For protease 3C activity; Proton donor/acceptor in the catalytic mechanism. Catalysis depends on for protease 3C activity residues Asp-1734 and Cys-1813. The short motif at 1879-1887 (MRKTKLAPT) is the Nuclear localization signal element. One can recognise a RdRp catalytic domain in the interval 2097 to 2215 (KNVWDVDYSA…ASDYDLDFEA (119 aa)). Asp-2201 acts as the For RdRp activity in catalysis.

This sequence belongs to the picornaviruses polyprotein family. As to quaternary structure, interacts with host ISG15. In terms of assembly, interacts (via R-G-D motif) with host ITGAV/ITGB6. Interacts with host MAVS; this interaction inhibits binding of host TRAF3 to MAVS, thereby suppressing interferon-mediated responses. Forms homooligomers. As to quaternary structure, homohexamer. Interacts with host VIM. Interacts with host BECN1. In terms of assembly, interacts with host DCTN3. Interacts with RNA-dependent RNA polymerase; this interaction allows 3B-1 to binds 2 polymerases and act as a primer. It also allows the recruitment of the RNA-dependent RNA polymerase to host membranes. As to quaternary structure, interacts with RNA-dependent RNA polymerase; this interaction allows 3B-2 to act as a primer. In terms of assembly, interacts with RNA-dependent RNA polymerase; this interaction allows 3B-3 to act as a primer. Interacts with 3B-1; this interaction allows 3B-1 to binds 2 polymerases and act as a primer. It also allows the recruitment of the RNA-dependent RNA polymerase to host membranes. Interacts with 3B-2; this interaction allows 3B-2 to act as a primer. Interacts with 3B-3; this interaction allows 3B-3 to act as a primer. Removes six residues from its own C-terminus, generating sLb(pro). Post-translationally, specific enzymatic cleavages in vivo by the viral proteases yield a variety of precursors and mature proteins. The polyprotein seems to be cotranslationally cleaved at the 2A/2B junction by a ribosomal skip from one codon to the next without formation of a peptide bond. This process would release the L-P1-2A peptide from the translational complex. In terms of processing, during virion maturation, immature virions are rendered infectious following cleavage of VP0 into VP4 and VP2. This maturation seems to be an autocatalytic event triggered by the presence of RNA in the capsid and is followed by a conformational change of the particle. Myristoylation is required during RNA encapsidation and formation of the mature virus particle. Post-translationally, uridylylated by the polymerase and covalently linked to the 5'-end of genomic RNA. These uridylylated forms act as a nucleotide-peptide primer for the polymerase.

Its subcellular location is the host nucleus. It is found in the host cytoplasm. The protein resides in the virion. It localises to the host endoplasmic reticulum membrane. The protein localises to the host cytoplasmic vesicle membrane. The enzyme catalyses Autocatalytically cleaves itself from the polyprotein of the foot-and-mouth disease virus by hydrolysis of a Lys-|-Gly bond, but then cleaves host cell initiation factor eIF-4G at bonds -Gly-|-Arg- and -Lys-|-Arg-.. It catalyses the reaction a ribonucleoside 5'-triphosphate + H2O = a ribonucleoside 5'-diphosphate + phosphate + H(+). It carries out the reaction RNA(n) + a ribonucleoside 5'-triphosphate = RNA(n+1) + diphosphate. The catalysed reaction is Selective cleavage of Gln-|-Gly bond in the poliovirus polyprotein. In other picornavirus reactions Glu may be substituted for Gln, and Ser or Thr for Gly.. In terms of biological role, autocatalytically cleaves itself from the polyprotein at the L/VP0 junction. Also cleaves the host translation initiation factors EIF4G1 and EIF4G3, in order to shut off the capped cellular mRNA transcription. Plays a role in counteracting host innate antiviral response using diverse mechanisms. Possesses a deubiquitinase activity acting on both 'Lys-48' and 'Lys-63'-linked polyubiquitin chains. In turn, inhibits the ubiquitination and subsequent activation of key signaling molecules of type I IFN response such as host RIGI, TBK1, TRAF3 and TRAF6. Inhibits host NF-kappa-B activity by inducing a decrease in RELA mRNA levels. Cleaves a peptide bond in the C-terminus of host ISG15, resulting in the damaging of this modifier that can no longer be attached to target proteins. Also cleaves host G3BP1 and G3BP2 in order to inhibit cytoplasmic stress granules assembly. Its function is as follows. Lies on the inner surface of the capsid shell. After binding to the host receptor, the capsid undergoes conformational changes. Capsid protein VP4 is released, capsid protein VP1 N-terminus is externalized, and together, they shape a pore in the host membrane through which the viral genome is translocated into the host cell cytoplasm. After genome has been released, the channel shrinks. Forms an icosahedral capsid of pseudo T=3 symmetry with capsid proteins VP1 and VP3. The capsid is composed of 60 copies of each capsid protein organized in the form of twelve pentamers and encloses the viral positive strand RNA genome. Upon acidifcation in the endosome, dissociates into pentamers. Functionally, forms an icosahedral capsid of pseudo T=3 symmetry with capsid proteins VP0 and VP3. The capsid is composed of 60 copies of each capsid protein organized in the form of twelve pentamers and encloses the viral positive strand RNA genome. Upon acidifcation in the endosome, dissociates into pentamers. In terms of biological role, forms an icosahedral capsid of pseudo T=3 symmetry with capsid proteins VP2 and VP3. The capsid is composed of 60 copies of each capsid protein organized in the form of twelve pentamers and encloses the viral positive strand RNA genome. Mediates cell entry by attachment to an integrin receptor, usually host ITGAV/ITGB6. In addition, targets host MAVS to suppress type I IFN pathway. Upon acidifcation in the endosome, dissociates into pentamers. Its function is as follows. Mediates self-processing of the polyprotein by a translational effect termed 'ribosome skipping'. Mechanistically, 2A-mediated cleavage occurs between the C-terminal glycine and the proline of the downstream protein 2B. In the case of foot-and-mouth disease virus, the 2A oligopeptide is post-translationally 'trimmed' from the C-terminus of the upstream protein 1D by 3C proteinase. Plays an essential role in the virus replication cycle by acting as a viroporin. Creates a pore in the host endoplasmic reticulum and as a consequence releases Ca2+ in the cytoplasm of infected cell. In turn, high levels of cytoplasmic calcium may trigger membrane trafficking and transport of viral ER-associated proteins to viroplasms, sites of viral genome replication. Functionally, associates with and induces structural rearrangements of intracellular membranes. Triggers host autophagy by interacting with host BECN1 and thereby promotes viral replication. Participates in viral replication and interacts with host DHX9. Displays RNA-binding, nucleotide binding and NTPase activities. May play a role in virion morphogenesis and viral RNA encapsidation by interacting with the capsid protein VP3. In terms of biological role, plays important roles in virus replication, virulence and host range. Cooperates with host DDX56 to inhibit IRF3 nuclear translocation and subsequent type I interferon production. Its function is as follows. Covalently linked to the 5'-end of both the positive-strand and negative-strand genomic RNAs. Acts as a genome-linked replication primer. Cysteine protease that generates mature viral proteins from the precursor polyprotein. In addition to its proteolytic activity, binds to viral RNA and thus influences viral genome replication. RNA and substrate bind cooperatively to the protease. Functionally, RNA-directed RNA polymerase 3D-POL replicates genomic and antigenomic RNA by recognizing replications specific signals. Covalently attaches UMP to a tyrosine of VPg, which is used to prime RNA synthesis. The positive stranded RNA genome is first replicated at virus induced membranous vesicles, creating a dsRNA genomic replication form. This dsRNA is then used as template to synthesize positive stranded RNA genomes. ss(+)RNA genomes are either translated, replicated or encapsidated. The chain is Genome polyprotein from Foot-and-mouth disease virus (isolate -/Azerbaijan/A22-550/1965 serotype A) (FMDV).